The following is a 580-amino-acid chain: Probable inactive 1-aminocyclopropane-1-carboxylate synthase-like protein 2 (580 aa).

The segment at 1 to 43 (MSENRNEGSSQAAKANSDTQTPSHFKVTHPRLRDQLKKKSSKK) is disordered. Residues 7 to 23 (EGSSQAAKANSDTQTPS) show a composition bias toward polar residues. The residue at position 417 (K417) is an N6-(pyridoxal phosphate)lysine.

This sequence belongs to the class-I pyridoxal-phosphate-dependent aminotransferase family.

The chain is Probable inactive 1-aminocyclopropane-1-carboxylate synthase-like protein 2 (Accsl) from Mus musculus (Mouse).